The following is a 138-amino-acid chain: MEGSEAGGGGLLQQILSLRLVPRVGNGTTYSSPLSTFPEMWYGVFLWALVSSLSFHVPAALLALFTLRHHKYGRFMSVSLLLMGIVGPITAGILTSAAIAGVYRAAGKKMIPFEALIFEVGQTFCVVVVSFLRILATL.

The Lumenal segment spans residues Met1–Val44. Asn26 is a glycosylation site (N-linked (GlcNAc...) asparagine). The helical transmembrane segment at Phe45 to Phe65 threads the bilayer. Residues Thr66–Ser79 are Cytoplasmic-facing. A helical transmembrane segment spans residues Leu80–Ala100. Residues Gly101–Met110 are Lumenal-facing. Residues Ile111 to Phe131 traverse the membrane as a helical segment. Over Leu132–Leu138 the chain is Cytoplasmic.

Belongs to the TMEM170 family.

The protein localises to the endoplasmic reticulum membrane. It is found in the nucleus envelope. Functionally, may regulate membrane morphogenesis in the endoplasmic reticulum (ER) by promoting ER sheet formation at the expense of ER tubules. This is Transmembrane protein 170A (TMEM170A) from Gallus gallus (Chicken).